The sequence spans 102 residues: Probable endoribonuclease MazF2 (102 aa).

Belongs to the PemK/MazF family. Forms a complex with cognate antitoxin MazE2.

Functionally, toxic component of a type II toxin-antitoxin (TA) system. Acts as an endoribonuclease. Neutralized by coexpression with cognate antitoxin MazE2. This chain is Probable endoribonuclease MazF2 (mazF2), found in Mycobacterium tuberculosis (strain CDC 1551 / Oshkosh).